We begin with the raw amino-acid sequence, 433 residues long: 23S rRNA (uracil(1939)-C(5))-methyltransferase RlmD (433 aa).

A TRAM domain is found at 10-68; that stretch reads RTTTRQIITVSVNDLDSFGQGVARHNGKTLFIPGLLPQENAEVTVTEDKKQYARAKVVR. C81, C87, C90, and C162 together coordinate [4Fe-4S] cluster. Residues Q265, F294, N299, E315, N342, and D363 each contribute to the S-adenosyl-L-methionine site. The Nucleophile role is filled by C389.

This sequence belongs to the class I-like SAM-binding methyltransferase superfamily. RNA M5U methyltransferase family. RlmD subfamily.

It carries out the reaction uridine(1939) in 23S rRNA + S-adenosyl-L-methionine = 5-methyluridine(1939) in 23S rRNA + S-adenosyl-L-homocysteine + H(+). In terms of biological role, catalyzes the formation of 5-methyl-uridine at position 1939 (m5U1939) in 23S rRNA. In Escherichia coli O157:H7, this protein is 23S rRNA (uracil(1939)-C(5))-methyltransferase RlmD.